The primary structure comprises 459 residues: MNESVPDSVEDNGNSVPANGLLVLPDNDHEEGGVGSPQRSNSVESPGGSVHSTRKGFGLKKWRRIKRDGPVRDEAAPVDDGSKLLKRGLAGLVNPPSKHVEFSSVEARQSSEGSVGSVNMVHHPGVANGFSPDIGCMFAVGQAFEKSEEHSGNTIGGKNVVGGKVVSGSQEKLWSDTIKRASEERGDIEKEKPCSSLDSDLRSSDFVFSTGSVSVGNHGEKDERLTMNYIGGFSNEGQVKEEVQTYSRSENGNKEDDGESKKNNNHWADKDALADSIRSFAVLQEVLWKEVQSFQELGKESVLLHSNTDELSSDQPSHQNCKEDNSTSSGSKALILKEKVKLLEHKLEEARAALEAKEARIQELENSKIESELECIFQRKIETEIEHLMLTRSLSSLQVLQETKKLHSLKEDPVSNRGNILGKTCKLGFYILTQLILLVSILRFLVLQFSPASRLVIPT.

The segment covering 1-17 (MNESVPDSVEDNGNSVP) has biased composition (polar residues). The disordered stretch occupies residues 1–78 (MNESVPDSVE…GPVRDEAAPV (78 aa)). A compositionally biased stretch (basic residues) spans 52-66 (STRKGFGLKKWRRIK). 2 consecutive short sequence motifs (nuclear localization signal) follow at residues 60–61 (KK) and 63–64 (RR). Over residues 67 to 78 (RDGPVRDEAAPV) the composition is skewed to basic and acidic residues. The short motif at 86 to 87 (KR) is the Nuclear localization signal 3 element. Disordered regions lie at residues 240–266 (KEEVQTYSRSENGNKEDDGESKKNNNH) and 308–330 (TDELSSDQPSHQNCKEDNSTSSG). Residues 251 to 266 (NGNKEDDGESKKNNNH) are compositionally biased toward basic and acidic residues. The span at 308–319 (TDELSSDQPSHQ) shows a compositional bias: polar residues. The stretch at 331–375 (SKALILKEKVKLLEHKLEEARAALEAKEARIQELENSKIESELEC) forms a coiled coil. The KASH domain maps to 426–459 (KLGFYILTQLILLVSILRFLVLQFSPASRLVIPT). Residues 427-447 (LGFYILTQLILLVSILRFLVL) traverse the membrane as a helical segment.

As to quaternary structure, component of Ran complexes at least composed of WIT1 or WIT2, RANGAP1 or RANGAP2, and WIP1 or WIP2 or WIP3. Interacts with RANGAP1, WPP1/MAF1, and WPP2/MAF2. Interacts with SUN1 and SUN2. Core component of the LINC complex which is composed of inner nuclear membrane SUN domain-containing proteins coupled to outer nuclear membrane WIP and WIT proteins. The LINC complex also involves nucleoskeletal proteins CRWN/LINC and possibly KAKU4 and the cytoskeletal myosin KAKU1. Interacts with WIT2. Expressed in seedlings, roots, stems, leaves, and flowers.

The protein resides in the nucleus envelope. It localises to the nucleus membrane. Mediates and enhances the nuclear envelope docking of RANGAP proteins mediated by WIT1 and WIT2 in the undifferentiated cells of root tips. As component of the SUN-WIP-WIT2-KAKU1 complex, mediates the transfer of cytoplasmic forces to the nuclear envelope (NE), leading to nuclear shape changes. This chain is WPP domain-interacting protein 3 (WIP3), found in Arabidopsis thaliana (Mouse-ear cress).